Here is a 505-residue protein sequence, read N- to C-terminus: Trans-cinnamate 4-monooxygenase C4H2 (505 aa).

2 consecutive short sequence motifs (nuclear localization signal) follow at residues 161-168 and 247-254; these read VKKMKESN and EKRLKLFK. C447 is a binding site for heme.

Belongs to the cytochrome P450 family. It depends on heme as a cofactor.

It is found in the nucleus. The catalysed reaction is (E)-cinnamate + reduced [NADPH--hemoprotein reductase] + O2 = (E)-4-coumarate + oxidized [NADPH--hemoprotein reductase] + H2O + H(+). It functions in the pathway phenylpropanoid metabolism; trans-4-coumarate biosynthesis; trans-4-coumarate from trans-cinnamate: step 1/1. Functionally, component of the floral volatile benzenoid/phenylpropanoid (FVBP) biosynthetic pathway that controls carbon flux to pigments essential for pollination or UV protection, to numerous pytoalexins synthesized by plants when challenged by pathogens, and to lignins. In Petunia hybrida (Petunia), this protein is Trans-cinnamate 4-monooxygenase C4H2.